The chain runs to 126 residues: Acidic phospholipase A2 4 (126 aa).

A signal peptide is located at residue Ser-1. Positions 2-7 are excised as a propeptide; the sequence is NRPMPL. Intrachain disulfides connect Cys-18–Cys-78, Cys-33–Cys-125, Cys-35–Cys-51, Cys-50–Cys-106, Cys-57–Cys-99, Cys-67–Cys-92, and Cys-85–Cys-97. Ca(2+) contacts are provided by Tyr-34, Gly-36, and Gly-38. His-54 is an active-site residue. Residue Asp-55 coordinates Ca(2+). Asp-100 is a catalytic residue.

It belongs to the phospholipase A2 family. Group I subfamily. D49 sub-subfamily. As to quaternary structure, monomer. Requires Ca(2+) as cofactor. As to expression, expressed by the venom gland.

It is found in the secreted. The catalysed reaction is a 1,2-diacyl-sn-glycero-3-phosphocholine + H2O = a 1-acyl-sn-glycero-3-phosphocholine + a fatty acid + H(+). In terms of biological role, snake venom phospholipase A2 (PLA2) that exhibits strong anticoagulant activity, which is not due to the catalytic activity. PLA2 catalyzes the calcium-dependent hydrolysis of the 2-acyl groups in 3-sn-phosphoglycerides. This Naja sagittifera (Andaman cobra) protein is Acidic phospholipase A2 4.